A 525-amino-acid chain; its full sequence is MSEKLAARLEKLRRRHPQALADIYRGIEKEGLRVDSKGFIAQSDHPQALGSALTHPNITTDYSEALLELITPVTREVDELLTSLQEIHQFVHANLPAGESLWAGSMPSLLDGDESIRIAEYGESNLGKIKHVYRRGLAYRYGRIMQSIAGVHFNFSLGDDFWRAYQEVLAQSAPLQEFKSESYFSLIRNFRRWSWLLMYLFGASPALDRSFLNGRDHKLDQFGTDTLGLPHATSLRMSDLGYQNNAQSSLKICFNHLSTYVKTLYDATHTPFPRYEAIGLQRDGEYIQLNANLLQIENEYYNTIRPKRVTQSGEKPIQALKRRGIEYIEVRCLDLDPFSPIGVSESQIRFLDAFLLTCLLSDSAKIVDEECSIIEENFLTAVSRGRATDVELVRLLQNDYVQGGLQEWASRILEQVELCARELDAIKGGDSYAVAVRDARAKVNDPSLTPSARTYAAVSNGQSYVDWTLAMSQAHHQTLIANPLSPERMQHYVRAGEQSWADERALREADNLSFDAYLKQYLTYV.

Belongs to the glutamate--cysteine ligase type 1 family. Type 1 subfamily.

The enzyme catalyses L-cysteine + L-glutamate + ATP = gamma-L-glutamyl-L-cysteine + ADP + phosphate + H(+). It participates in sulfur metabolism; glutathione biosynthesis; glutathione from L-cysteine and L-glutamate: step 1/2. This is Glutamate--cysteine ligase from Hahella chejuensis (strain KCTC 2396).